A 1158-amino-acid polypeptide reads, in one-letter code: ATP-dependent helicase/deoxyribonuclease subunit B (1158 aa).

The region spanning 1–275 is the UvrD-like helicase ATP-binding domain; sequence MTLHAYLGRA…QYFNQLYRFN (275 aa). 8-15 is an ATP binding site; the sequence is GRAGTGKS. In terms of domain architecture, UvrD-like helicase C-terminal spans 269–583; sequence NQLYRFNNQD…SIGTMDLAKV (315 aa). Positions 784, 1112, 1115, and 1121 each coordinate [4Fe-4S] cluster.

The protein belongs to the helicase family. AddB/RexB type 1 subfamily. As to quaternary structure, heterodimer of AddA and AddB. The cofactor is Mg(2+). [4Fe-4S] cluster is required as a cofactor.

Its function is as follows. The heterodimer acts as both an ATP-dependent DNA helicase and an ATP-dependent, dual-direction single-stranded exonuclease. Recognizes the chi site generating a DNA molecule suitable for the initiation of homologous recombination. The AddB subunit has 5' -&gt; 3' nuclease activity but not helicase activity. The protein is ATP-dependent helicase/deoxyribonuclease subunit B of Staphylococcus aureus (strain MSSA476).